A 331-amino-acid chain; its full sequence is Ketol-acid reductoisomerase (NADP(+)) (331 aa).

The KARI N-terminal Rossmann domain maps to 2-182 (AQLFYDSDAD…GGTRAGILET (181 aa)). NADP(+)-binding positions include 25–28 (YGSQ), Ser51, Ser53, and 83–86 (DEFQ). The active site involves His108. Gly134 contributes to the NADP(+) binding site. In terms of domain architecture, KARI C-terminal knotted spans 183–328 (NFKEETETDL…KGLRAMFSWL (146 aa)). 4 residues coordinate Mg(2+): Asp191, Glu195, Glu227, and Glu231. A substrate-binding site is contributed by Ser252.

It belongs to the ketol-acid reductoisomerase family. Requires Mg(2+) as cofactor.

It catalyses the reaction (2R)-2,3-dihydroxy-3-methylbutanoate + NADP(+) = (2S)-2-acetolactate + NADPH + H(+). It carries out the reaction (2R,3R)-2,3-dihydroxy-3-methylpentanoate + NADP(+) = (S)-2-ethyl-2-hydroxy-3-oxobutanoate + NADPH + H(+). Its pathway is amino-acid biosynthesis; L-isoleucine biosynthesis; L-isoleucine from 2-oxobutanoate: step 2/4. It functions in the pathway amino-acid biosynthesis; L-valine biosynthesis; L-valine from pyruvate: step 2/4. Functionally, involved in the biosynthesis of branched-chain amino acids (BCAA). Catalyzes an alkyl-migration followed by a ketol-acid reduction of (S)-2-acetolactate (S2AL) to yield (R)-2,3-dihydroxy-isovalerate. In the isomerase reaction, S2AL is rearranged via a Mg-dependent methyl migration to produce 3-hydroxy-3-methyl-2-ketobutyrate (HMKB). In the reductase reaction, this 2-ketoacid undergoes a metal-dependent reduction by NADPH to yield (R)-2,3-dihydroxy-isovalerate. The sequence is that of Ketol-acid reductoisomerase (NADP(+)) from Prochlorococcus marinus (strain MIT 9313).